The primary structure comprises 441 residues: Peroxisomal multifunctional enzyme A (441 aa).

The interval 1–302 is 3-hydroxyacyl-CoA dehydrogenase; that stretch reads MALNFKDKVV…VNSKPADGES (302 aa). Residues 11–35, Ile19, Asp38, 73–74, and Asn97 each bind NAD(+); these read IVTG…AKVV and SV. Residue Ser149 participates in substrate binding. Tyr162 functions as the Proton acceptor in the catalytic mechanism. NAD(+)-binding positions include 162–166 and 194–197; these read YGSMK and AASR. The 110-residue stretch at 331–440 folds into the SCP2 domain; the sequence is ASKIFTTIQG…KLGALMQGSK (110 aa). Gln412 provides a ligand contact to substrate.

It belongs to the short-chain dehydrogenases/reductases (SDR) family.

It is found in the peroxisome. It carries out the reaction a (3S)-3-hydroxyacyl-CoA + NAD(+) = a 3-oxoacyl-CoA + NADH + H(+). Its pathway is lipid metabolism; fatty acid beta-oxidation. Enzyme acting on the peroxisomal beta-oxidation pathway for fatty acids. Protects the cells from the increase of the harmful xenobiotic fatty acids incorporated from their diets and optimizes cellular lipid composition for proper development. The sequence is that of Peroxisomal multifunctional enzyme A (mfeA) from Dictyostelium discoideum (Social amoeba).